The primary structure comprises 409 residues: F-box/kelch-repeat protein At1g48625 (409 aa).

The F-box domain occupies Ala2–Met49. Kelch repeat units follow at residues Phe169–Asn218 and Trp221–Cys266.

This Arabidopsis thaliana (Mouse-ear cress) protein is F-box/kelch-repeat protein At1g48625.